A 918-amino-acid polypeptide reads, in one-letter code: Probable lipoxygenase 6 (918 aa).

Positions A56–E76 are disordered. In terms of domain architecture, PLAT spans Q90–S218. Residues P221–I918 form the Lipoxygenase domain. Fe cation is bound by residues H573, H578, H765, N769, and I918.

The protein belongs to the lipoxygenase family. The cofactor is Fe cation.

The catalysed reaction is (9Z,12Z)-octadecadienoate + O2 = (13S)-hydroperoxy-(9Z,11E)-octadecadienoate. The enzyme catalyses (9Z,12Z,15Z)-octadecatrienoate + O2 = (13S)-hydroperoxy-(9Z,11E,15Z)-octadecatrienoate. It participates in lipid metabolism; oxylipin biosynthesis. In terms of biological role, plant lipoxygenase may be involved in a number of diverse aspects of plant physiology including growth and development, pest resistance, and senescence or responses to wounding. Catalyzes the hydroperoxidation of lipids containing a cis,cis-1,4-pentadiene structure. The sequence is that of Probable lipoxygenase 6 from Oryza sativa subsp. japonica (Rice).